The following is a 205-amino-acid chain: Dr1-associated corepressor (205 aa).

Residues 14–77 form the Histone-fold domain; it reads PARIKKIMQT…SHLKQCIELE (64 aa). The disordered stretch occupies residues 91-205; that stretch reads PDMQGDGEDN…DAEDEEDYDS (115 aa). The segment covering 98 to 108 has biased composition (basic and acidic residues); it reads EDNHVDGDKGP. The span at 138–155 shows a compositional bias: acidic residues; the sequence is SEQEDESEDTDTDGEEET. Residues 172–192 are compositionally biased toward pro residues; it reads PPTPFIPFTSPLPLPPAPPGP. Residues 196–205 show a composition bias toward acidic residues; that stretch reads DAEDEEDYDS.

Belongs to the NC2 alpha/DRAP1 family. Heterodimer with DR1. Binds BTAF1. In terms of processing, phosphorylation reduces DNA binding, but has no effect on heterodimerization and TBP binding.

Its subcellular location is the nucleus. Its function is as follows. The association of the DR1/DRAP1 heterodimer with TBP results in a functional repression of both activated and basal transcription of class II genes. This interaction precludes the formation of a transcription-competent complex by inhibiting the association of TFIIA and/or TFIIB with TBP. Can bind to DNA on its own. The protein is Dr1-associated corepressor (Drap1) of Mus musculus (Mouse).